Reading from the N-terminus, the 729-residue chain is Rho GTPase-activating protein 28 (729 aa).

The tract at residues 1–78 (MEVEDSGGVV…ASVDSSASME (78 aa)) is disordered. The segment covering 37–49 (LSRKSIPRCRRIN) has biased composition (basic residues). Positions 63–76 (SRSNSQASVDSSAS) are enriched in low complexity. Ser-70 is subject to Phosphoserine. Residue Thr-164 is modified to Phosphothreonine. A disordered region spans residues 180–234 (FGVSESPPSDSCEHATQLDGTKEEKDLPGVTKTSRPLPDDASLSSTTLSNGAQDE). Polar residues predominate over residues 221–231 (SLSSTTLSNGA). The Rho-GAP domain occupies 384 to 581 (VPLTVLLDND…LMLKYQKILW (198 aa)).

Functionally, GTPase activator for the Rho-type GTPases by converting them to an inactive GDP-bound state. This chain is Rho GTPase-activating protein 28 (Arhgap28), found in Mus musculus (Mouse).